Reading from the N-terminus, the 87-residue chain is Cell division topological specificity factor (87 aa).

It belongs to the MinE family.

Functionally, prevents the cell division inhibition by proteins MinC and MinD at internal division sites while permitting inhibition at polar sites. This ensures cell division at the proper site by restricting the formation of a division septum at the midpoint of the long axis of the cell. The chain is Cell division topological specificity factor from Herpetosiphon aurantiacus (strain ATCC 23779 / DSM 785 / 114-95).